A 245-amino-acid polypeptide reads, in one-letter code: 1-(5-phosphoribosyl)-5-[(5-phosphoribosylamino)methylideneamino] imidazole-4-carboxamide isomerase (245 aa).

Catalysis depends on D7, which acts as the Proton acceptor. D129 (proton donor) is an active-site residue.

Belongs to the HisA/HisF family.

The protein localises to the cytoplasm. The catalysed reaction is 1-(5-phospho-beta-D-ribosyl)-5-[(5-phospho-beta-D-ribosylamino)methylideneamino]imidazole-4-carboxamide = 5-[(5-phospho-1-deoxy-D-ribulos-1-ylimino)methylamino]-1-(5-phospho-beta-D-ribosyl)imidazole-4-carboxamide. The protein operates within amino-acid biosynthesis; L-histidine biosynthesis; L-histidine from 5-phospho-alpha-D-ribose 1-diphosphate: step 4/9. This chain is 1-(5-phosphoribosyl)-5-[(5-phosphoribosylamino)methylideneamino] imidazole-4-carboxamide isomerase, found in Shewanella frigidimarina (strain NCIMB 400).